A 261-amino-acid polypeptide reads, in one-letter code: Acyl-[acyl-carrier-protein]--UDP-N-acetylglucosamine O-acyltransferase (261 aa).

This sequence belongs to the transferase hexapeptide repeat family. LpxA subfamily. As to quaternary structure, homotrimer.

Its subcellular location is the cytoplasm. It carries out the reaction a (3R)-hydroxyacyl-[ACP] + UDP-N-acetyl-alpha-D-glucosamine = a UDP-3-O-[(3R)-3-hydroxyacyl]-N-acetyl-alpha-D-glucosamine + holo-[ACP]. It functions in the pathway glycolipid biosynthesis; lipid IV(A) biosynthesis; lipid IV(A) from (3R)-3-hydroxytetradecanoyl-[acyl-carrier-protein] and UDP-N-acetyl-alpha-D-glucosamine: step 1/6. In terms of biological role, involved in the biosynthesis of lipid A, a phosphorylated glycolipid that anchors the lipopolysaccharide to the outer membrane of the cell. The sequence is that of Acyl-[acyl-carrier-protein]--UDP-N-acetylglucosamine O-acyltransferase from Sulfurimonas denitrificans (strain ATCC 33889 / DSM 1251) (Thiomicrospira denitrificans (strain ATCC 33889 / DSM 1251)).